Reading from the N-terminus, the 161-residue chain is ATP synthase subunit b 1 (161 aa).

The helical transmembrane segment at 3–23 threads the bilayer; the sequence is FDASFFALVGLVLFFVLIAYL.

Belongs to the ATPase B chain family. F-type ATPases have 2 components, F(1) - the catalytic core - and F(0) - the membrane proton channel. F(1) has five subunits: alpha(3), beta(3), gamma(1), delta(1), epsilon(1). F(0) has three main subunits: a(1), b(2) and c(10-14). The alpha and beta chains form an alternating ring which encloses part of the gamma chain. F(1) is attached to F(0) by a central stalk formed by the gamma and epsilon chains, while a peripheral stalk is formed by the delta and b chains.

It localises to the cell inner membrane. F(1)F(0) ATP synthase produces ATP from ADP in the presence of a proton or sodium gradient. F-type ATPases consist of two structural domains, F(1) containing the extramembraneous catalytic core and F(0) containing the membrane proton channel, linked together by a central stalk and a peripheral stalk. During catalysis, ATP synthesis in the catalytic domain of F(1) is coupled via a rotary mechanism of the central stalk subunits to proton translocation. Its function is as follows. Component of the F(0) channel, it forms part of the peripheral stalk, linking F(1) to F(0). This is ATP synthase subunit b 1 from Agrobacterium fabrum (strain C58 / ATCC 33970) (Agrobacterium tumefaciens (strain C58)).